A 392-amino-acid polypeptide reads, in one-letter code: Mycofactocin maturase MftC (392 aa).

The Radical SAM core domain occupies 18 to 228 (LDAPICLTWE…YDWLVAKGDR (211 aa)). Residues Cys-32, Cys-36, Cys-39, Cys-253, Cys-260, Cys-271, Cys-312, Cys-315, Cys-321, Cys-325, and Cys-343 each contribute to the [4Fe-4S] cluster site. Positions 354 to 367 (KERVKPKPSGDHSR) are enriched in basic and acidic residues. Positions 354–377 (KERVKPKPSGDHSRGTKQGPVALK) are disordered.

This sequence belongs to the radical SAM superfamily. MftC family. It depends on [4Fe-4S] cluster as a cofactor.

It carries out the reaction [mycofactocin precursor peptide]-C-terminal glycyl-L-valyl-L-tyrosine + S-adenosyl-L-methionine = [mycofactocin precursor peptide]-C-terminal glycyl-N-{[2-(4-hydroxyphenyl)ethenyl]-3-methylbutanamide} + 5'-deoxyadenosine + L-methionine + CO2. It catalyses the reaction [mycofactocin precursor peptide]-C-terminal glycyl-N-{[2-(4-hydroxyphenyl)ethenyl]-3-methylbutanamide} + AH2 + S-adenosyl-L-methionine = [mycofactocin precursor peptide]-C-terminal glycyl-N-{5-[(4-hydroxyphenyl)methyl]-4,4-dimethyl-2-oxopyrrolidin-3-yl}acetamide + 5'-deoxyadenosine + L-methionine + A + H(+). Its function is as follows. Radical S-adenosylmethionine (SAM) enzyme responsible for the first step of the biosynthesis of the enzyme cofactor mycofactocin (MFT). Catalyzes two reactions at the C-terminus of the mycofactocin precursor (the MftA peptide). The first one is the oxidative decarboxylation of the C-terminal L-tyrosine of MftA, forming an unsaturated tyramine moiety. The second reaction is the cross-linking of the tyramine with the penultimate L-valine residue, forming a five-membered lactam ring. Its activity requires the presence of the MftB chaperone. Is required for the in vivo ethanol assimilation in M.smegmatis. The sequence is that of Mycofactocin maturase MftC from Mycolicibacterium smegmatis (strain ATCC 700084 / mc(2)155) (Mycobacterium smegmatis).